The chain runs to 216 residues: GTPase IMAP family member GIMD1 (216 aa).

Residues 5–216 (KMTINLALFG…ENCYQVLTFK (212 aa)) enclose the AIG1-type G domain. GTP-binding positions include 14–22 (GMTQSGKSS), Ser-35, and 147–149 (HAE).

It belongs to the TRAFAC class TrmE-Era-EngA-EngB-Septin-like GTPase superfamily. AIG1/Toc34/Toc159-like paraseptin GTPase family. IAN subfamily.

This is GTPase IMAP family member GIMD1 (GIMD1) from Bos taurus (Bovine).